The chain runs to 360 residues: Dual-specificity RNA methyltransferase RlmN (360 aa).

Residue E93 is the Proton acceptor of the active site. Residues 99–326 (EEDRNTLCIS…VITRSSRGAD (228 aa)) form the Radical SAM core domain. C106 and C331 are joined by a disulfide. C113, C117, and C120 together coordinate [4Fe-4S] cluster. Residues 158-159 (GE), S190, 212-214 (SLN), and N288 contribute to the S-adenosyl-L-methionine site. The active-site S-methylcysteine intermediate is the C331.

It belongs to the radical SAM superfamily. RlmN family. The cofactor is [4Fe-4S] cluster.

It is found in the cytoplasm. It catalyses the reaction adenosine(2503) in 23S rRNA + 2 reduced [2Fe-2S]-[ferredoxin] + 2 S-adenosyl-L-methionine = 2-methyladenosine(2503) in 23S rRNA + 5'-deoxyadenosine + L-methionine + 2 oxidized [2Fe-2S]-[ferredoxin] + S-adenosyl-L-homocysteine. The catalysed reaction is adenosine(37) in tRNA + 2 reduced [2Fe-2S]-[ferredoxin] + 2 S-adenosyl-L-methionine = 2-methyladenosine(37) in tRNA + 5'-deoxyadenosine + L-methionine + 2 oxidized [2Fe-2S]-[ferredoxin] + S-adenosyl-L-homocysteine. Its function is as follows. Specifically methylates position 2 of adenine 2503 in 23S rRNA and position 2 of adenine 37 in tRNAs. m2A2503 modification seems to play a crucial role in the proofreading step occurring at the peptidyl transferase center and thus would serve to optimize ribosomal fidelity. The protein is Dual-specificity RNA methyltransferase RlmN of Geobacter sulfurreducens (strain ATCC 51573 / DSM 12127 / PCA).